A 149-amino-acid chain; its full sequence is Calmodulin-3 (149 aa).

N-acetylalanine is present on A2. 4 consecutive EF-hand domains span residues 8 to 43 (DQIA…LGQN), 44 to 79 (PTEA…KMKD), 81 to 116 (DSEE…LGEK), and 117 to 149 (LTDE…MMAK). Residues D21, D23, D25, C27, E32, D57, D59, N61, T63, E68, D94, D96, N98, and E105 each contribute to the Ca(2+) site. At K116 the chain carries N6,N6,N6-trimethyllysine. 5 residues coordinate Ca(2+): D130, D132, D134, Q136, and E141.

The protein belongs to the calmodulin family.

Functionally, calmodulin mediates the control of a large number of enzymes, ion channels and other proteins by Ca(2+). Among the enzymes to be stimulated by the calmodulin-Ca(2+) complex are a number of protein kinases and phosphatases. This is Calmodulin-3 (CAM3) from Oryza sativa subsp. japonica (Rice).